Here is an 88-residue protein sequence, read N- to C-terminus: EKC/KEOPS complex subunit SPAC4H3.13 (88 aa).

It belongs to the CTAG/PCC1 family. In terms of assembly, component of the EKC/KEOPS complex composed of at least of SPAP27G11.07c/BUD32, cgi121, gon7, pgp2 and SPAC4H3.13/PCC1; the whole complex dimerizes.

It is found in the cytoplasm. Its subcellular location is the nucleus. The protein localises to the chromosome. The protein resides in the telomere. Its function is as follows. Component of the EKC/KEOPS complex that is required for the formation of a threonylcarbamoyl group on adenosine at position 37 (t(6)A37) in tRNAs that read codons beginning with adenine. The complex is probably involved in the transfer of the threonylcarbamoyl moiety of threonylcarbamoyl-AMP (TC-AMP) to the N6 group of A37. SPAC4H3.13/PCC1 functions as a dimerization module for the complex. The EKC/KEOPS complex also promotes both telomere uncapping and telomere elongation. The complex is required for efficient recruitment of transcriptional coactivators. The protein is EKC/KEOPS complex subunit SPAC4H3.13 of Schizosaccharomyces pombe (strain 972 / ATCC 24843) (Fission yeast).